The chain runs to 104 residues: ATP synthase subunit c (104 aa).

2 helical membrane passes run leucine 37–valine 57 and alanine 83–valine 103.

It belongs to the ATPase C chain family. F-type ATPases have 2 components, F(1) - the catalytic core - and F(0) - the membrane proton channel. F(1) has five subunits: alpha(3), beta(3), gamma(1), delta(1), epsilon(1). F(0) has three main subunits: a(1), b(2) and c(10-14). The alpha and beta chains form an alternating ring which encloses part of the gamma chain. F(1) is attached to F(0) by a central stalk formed by the gamma and epsilon chains, while a peripheral stalk is formed by the delta and b chains.

The protein localises to the cell membrane. Its function is as follows. F(1)F(0) ATP synthase produces ATP from ADP in the presence of a proton or sodium gradient. F-type ATPases consist of two structural domains, F(1) containing the extramembraneous catalytic core and F(0) containing the membrane proton channel, linked together by a central stalk and a peripheral stalk. During catalysis, ATP synthesis in the catalytic domain of F(1) is coupled via a rotary mechanism of the central stalk subunits to proton translocation. In terms of biological role, key component of the F(0) channel; it plays a direct role in translocation across the membrane. A homomeric c-ring of between 10-14 subunits forms the central stalk rotor element with the F(1) delta and epsilon subunits. This is ATP synthase subunit c from Mesoplasma florum (strain ATCC 33453 / NBRC 100688 / NCTC 11704 / L1) (Acholeplasma florum).